The sequence spans 177 residues: Large ribosomal subunit protein uL6 (177 aa).

This sequence belongs to the universal ribosomal protein uL6 family. Part of the 50S ribosomal subunit.

This protein binds to the 23S rRNA, and is important in its secondary structure. It is located near the subunit interface in the base of the L7/L12 stalk, and near the tRNA binding site of the peptidyltransferase center. The chain is Large ribosomal subunit protein uL6 from Acinetobacter baylyi (strain ATCC 33305 / BD413 / ADP1).